We begin with the raw amino-acid sequence, 448 residues long: Probable glycine dehydrogenase (decarboxylating) subunit 1 (448 aa).

Belongs to the GcvP family. N-terminal subunit subfamily. The glycine cleavage system is composed of four proteins: P, T, L and H. In this organism, the P 'protein' is a heterodimer of two subunits.

It catalyses the reaction N(6)-[(R)-lipoyl]-L-lysyl-[glycine-cleavage complex H protein] + glycine + H(+) = N(6)-[(R)-S(8)-aminomethyldihydrolipoyl]-L-lysyl-[glycine-cleavage complex H protein] + CO2. Functionally, the glycine cleavage system catalyzes the degradation of glycine. The P protein binds the alpha-amino group of glycine through its pyridoxal phosphate cofactor; CO(2) is released and the remaining methylamine moiety is then transferred to the lipoamide cofactor of the H protein. The chain is Probable glycine dehydrogenase (decarboxylating) subunit 1 from Geobacillus kaustophilus (strain HTA426).